A 219-amino-acid chain; its full sequence is Endonuclease III (219 aa).

In terms of domain architecture, HhH spans 109–128 (RDELVKLPGVGRKTANVVVS). The [4Fe-4S] cluster site is built by Cys189, Cys196, Cys199, and Cys205.

It belongs to the Nth/MutY family. The cofactor is [4Fe-4S] cluster.

The enzyme catalyses 2'-deoxyribonucleotide-(2'-deoxyribose 5'-phosphate)-2'-deoxyribonucleotide-DNA = a 3'-end 2'-deoxyribonucleotide-(2,3-dehydro-2,3-deoxyribose 5'-phosphate)-DNA + a 5'-end 5'-phospho-2'-deoxyribonucleoside-DNA + H(+). In terms of biological role, DNA repair enzyme that has both DNA N-glycosylase activity and AP-lyase activity. The DNA N-glycosylase activity releases various damaged pyrimidines from DNA by cleaving the N-glycosidic bond, leaving an AP (apurinic/apyrimidinic) site. The AP-lyase activity cleaves the phosphodiester bond 3' to the AP site by a beta-elimination, leaving a 3'-terminal unsaturated sugar and a product with a terminal 5'-phosphate. This chain is Endonuclease III, found in Bacillus subtilis (strain 168).